Consider the following 727-residue polypeptide: Prolyl endopeptidase-like (727 aa).

Position 1 is an N-acetylmethionine (methionine 1). Residues serine 559, aspartate 645, and histidine 690 each act as charge relay system in the active site.

The protein belongs to the peptidase S9A family. Homodimer. Interacts with the AP-1 complex. Expressed in pyramidal neurons of the temporal cortex and neocortex (at protein level). Widely expressed. Expressed at higher level in brain, skeletal muscle, heart and kidney. Expressed at the endplates in the neuromuscular junction.

It localises to the cytoplasm. Its subcellular location is the cytosol. The protein resides in the golgi apparatus. The protein localises to the trans-Golgi network. It is found in the cytoskeleton. It localises to the nucleus. Its activity is regulated as follows. Inhibited by PMSF and Prefabloc, as well as leupeptin at high concentrations. Partially inhibited by TPCK, a chymotrypsin inhibitor and E64, a cysteine protease inhibitor. Not affected by 4-amidinophenyl-methanesulfonyl fluoride (APMSF), pepstatin or EDTA. Inhibited by 1-isobutyl-3-oxo-3,5,6,7-tetrahydro-2H-cyclopenta[c]pyridine-4-carbonitrile. Its function is as follows. Serine peptidase whose precise substrate specificity remains unclear. Does not cleave peptides after a arginine or lysine residue. Regulates trans-Golgi network morphology and sorting by regulating the membrane binding of the AP-1 complex. May play a role in the regulation of synaptic vesicle exocytosis. The chain is Prolyl endopeptidase-like (PREPL) from Homo sapiens (Human).